The primary structure comprises 117 residues: Ribosome-binding factor A (117 aa).

Belongs to the RbfA family. In terms of assembly, monomer. Binds 30S ribosomal subunits, but not 50S ribosomal subunits or 70S ribosomes.

The protein localises to the cytoplasm. One of several proteins that assist in the late maturation steps of the functional core of the 30S ribosomal subunit. Associates with free 30S ribosomal subunits (but not with 30S subunits that are part of 70S ribosomes or polysomes). Required for efficient processing of 16S rRNA. May interact with the 5'-terminal helix region of 16S rRNA. The protein is Ribosome-binding factor A of Anaplasma marginale (strain St. Maries).